The chain runs to 90 residues: MDNMSPRLRAFLSEPIGEKDVCWVDGISHELAINLVTKGINKAYILLGQFLLMHKNEAEFQRWLICCFGATECEAQQTSHCLKEWCACFL.

This sequence belongs to the BAF family. As to quaternary structure, homodimer. Heterodimerizes with BANF1. Expressed strongly in testis and pancreas. Also detected in brain, colon, liver, lung, ovary, placenta, prostate, small intestine, spleen and thymus. Not detected in heart, kidney and skeletal muscle.

It is found in the nucleus. The protein localises to the cytoplasm. May play a role in BANF1 regulation and influence tissue-specific roles of BANF1. The sequence is that of Barrier-to-autointegration factor-like protein (BANF2) from Homo sapiens (Human).